We begin with the raw amino-acid sequence, 120 residues long: NAD(P)H-quinone oxidoreductase subunit 3, chloroplastic (120 aa).

Transmembrane regions (helical) follow at residues 9-29 (IFWT…WISG), 64-84 (MFAL…PWAM), and 88-108 (VLGV…VVGL).

The protein belongs to the complex I subunit 3 family. In terms of assembly, NDH is composed of at least 16 different subunits, 5 of which are encoded in the nucleus.

The protein localises to the plastid. The protein resides in the chloroplast thylakoid membrane. The enzyme catalyses a plastoquinone + NADH + (n+1) H(+)(in) = a plastoquinol + NAD(+) + n H(+)(out). It carries out the reaction a plastoquinone + NADPH + (n+1) H(+)(in) = a plastoquinol + NADP(+) + n H(+)(out). Its function is as follows. NDH shuttles electrons from NAD(P)H:plastoquinone, via FMN and iron-sulfur (Fe-S) centers, to quinones in the photosynthetic chain and possibly in a chloroplast respiratory chain. The immediate electron acceptor for the enzyme in this species is believed to be plastoquinone. Couples the redox reaction to proton translocation, and thus conserves the redox energy in a proton gradient. The protein is NAD(P)H-quinone oxidoreductase subunit 3, chloroplastic of Zea mays (Maize).